The sequence spans 216 residues: Large ribosomal subunit protein uL1y (216 aa).

The protein belongs to the universal ribosomal protein uL1 family. As to quaternary structure, interacts with the GTPase NUG2.

In Arabidopsis thaliana (Mouse-ear cress), this protein is Large ribosomal subunit protein uL1y (RPL10AB).